The sequence spans 202 residues: N-(5'-phosphoribosyl)anthranilate isomerase (202 aa).

It belongs to the TrpF family.

It catalyses the reaction N-(5-phospho-beta-D-ribosyl)anthranilate = 1-(2-carboxyphenylamino)-1-deoxy-D-ribulose 5-phosphate. Its pathway is amino-acid biosynthesis; L-tryptophan biosynthesis; L-tryptophan from chorismate: step 3/5. This chain is N-(5'-phosphoribosyl)anthranilate isomerase, found in Listeria monocytogenes serotype 4b (strain F2365).